A 287-amino-acid polypeptide reads, in one-letter code: MINQANNQVNFSEQQFVHHKRFSVIRLTFSVAAIGILFIFLIGFGVQQLLTNTTSLGTLASDIRTLGTIAFVASLVSLILYFVTAFKLRNRNTTLAWFWGLIIADVISYGITLGVLLTLATTQLRELIDFKFSDIVFAFLGAALVYGTVWGLSALPSQQRRYQQTQTLFRIFIWAFFISIIASLLTFVLNFTVFRGGRTNILDLLFPGLSLIVGGIFSLLSVYFVCLQIRNEQDLVKLYESQDPALAKAQMWRSALFFGAWLVSSFMNLVYFILRIILLTRNLSRAF.

A run of 7 helical transmembrane segments spans residues 27-47 (LTFS…FGVQ), 66-86 (LGTI…VTAF), 97-117 (WFWG…GVLL), 135-155 (IVFA…LSAL), 171-191 (IFIW…VLNF), 205-225 (LFPG…VYFV), and 254-274 (SALF…YFIL).

The protein localises to the cell membrane. This is an uncharacterized protein from Mycoplasma pneumoniae (strain ATCC 29342 / M129 / Subtype 1) (Mycoplasmoides pneumoniae).